A 68-amino-acid chain; its full sequence is Small integral membrane protein 10-like protein 3 (68 aa).

This Homo sapiens (Human) protein is Small integral membrane protein 10-like protein 3.